The chain runs to 54 residues: Large ribosomal subunit protein bL33A (54 aa).

Belongs to the bacterial ribosomal protein bL33 family.

This chain is Large ribosomal subunit protein bL33A, found in Mesoplasma florum (strain ATCC 33453 / NBRC 100688 / NCTC 11704 / L1) (Acholeplasma florum).